A 240-amino-acid chain; its full sequence is T-cell antigen CD7 (240 aa).

A signal peptide spans 1-25 (MAGPPRLLLLPLLLALARGLPGALA). An Ig-like domain is found at 26–130 (AQEVQQSPHC…NVYGSGTLVL (105 aa)). At 26–180 (AQEVQQSPHC…PDPPAASALP (155 aa)) the chain is on the extracellular side. 2 disulfide bridges follow: Cys-35/Cys-142 and Cys-48/Cys-114. 2 N-linked (GlcNAc...) asparagine glycosylation sites follow: Asn-45 and Asn-96. The interval 140-172 (HRCSDAPPRASALPAPPTGSALPDPQTASALPD) is disordered. 4 repeat units span residues 145 to 153 (APPRASALP), 154 to 162 (APPTGSALP), 163 to 171 (DPQTASALP), and 172 to 180 (DPPAASALP). The segment at 145 to 180 (APPRASALPAPPTGSALPDPQTASALPDPPAASALP) is 4 X 9 AA tandem repeats, potential spacer function. Residues 181–201 (AALAVISFLLGLGLGVACVLA) traverse the membrane as a helical segment. Cys-198 is lipidated: S-palmitoyl cysteine. Residues 202-240 (RTQIKKLCSWRDKNSAACVVYEDMSHSRCNTLSSPNQYQ) lie on the Cytoplasmic side of the membrane.

As to quaternary structure, interacts with SECTM1. Expressed on T-cells and natural killer (NK) cells and their precursors.

It is found in the membrane. In terms of biological role, transmembrane glycoprotein expressed by T-cells and natural killer (NK) cells and their precursors. Plays a costimulatory role in T-cell activation upon binding to its ligand K12/SECTM1. In turn, mediates the production of cytokines such as IL-2. On resting NK-cells, CD7 activation results in a significant induction of interferon-gamma levels. This Homo sapiens (Human) protein is T-cell antigen CD7 (CD7).